The primary structure comprises 232 residues: Ribonuclease 3 (232 aa).

The RNase III domain occupies 5 to 134 (QTVLKNHFEI…FLGALLLDKD (130 aa)). Residue E47 participates in Mg(2+) binding. The active site involves D51. Residues D120 and E123 each coordinate Mg(2+). Residue E123 is part of the active site. The DRBM domain occupies 160-229 (DYKTHLQELL…AKNAVEKGLD (70 aa)).

Belongs to the ribonuclease III family. As to quaternary structure, homodimer. Mg(2+) serves as cofactor.

It localises to the cytoplasm. It catalyses the reaction Endonucleolytic cleavage to 5'-phosphomonoester.. In terms of biological role, digests double-stranded RNA. Involved in the processing of primary rRNA transcript to yield the immediate precursors to the large and small rRNAs (23S and 16S). Processes some mRNAs, and tRNAs when they are encoded in the rRNA operon. Processes pre-crRNA and tracrRNA of type II CRISPR loci if present in the organism. This is Ribonuclease 3 from Streptococcus pneumoniae (strain ATCC BAA-255 / R6).